We begin with the raw amino-acid sequence, 964 residues long: DNA mismatch repair protein MSH2 (964 aa).

ATP is bound at residue 688 to 695 (GPNMGGKS). The interaction with MSH6 stretch occupies residues 851–964 (DQSFGIHVAE…YLKYIKALLL (114 aa)).

The protein belongs to the DNA mismatch repair MutS family. As to quaternary structure, heterodimer consisting of MSH2-MSH6 (MutS alpha) or MSH2-MSH3 (MutS beta). Both heterodimers form a ternary complex with MutL alpha (MLH1-PMS1). MutS beta also forms a ternary complex with MutL beta (MLH1-MLH3), and possibly with a MLH1-MLH2 heterodimer. Both heterodimers interact with proliferating cell nuclear antigen (PCNA/POL30). This interaction is disrupted upon binding of the MutS heterodimers to mismatch DNA. Interacts with SAW1.

The protein resides in the nucleus. Its activity is regulated as follows. Inhibited by Cd(2+). Component of the post-replicative DNA mismatch repair system (MMR). Forms two different heterodimers: MutS alpha (MSH2-MSH6 heterodimer) and MutS beta (MSH2-MSH3 heterodimer), which bind to DNA mismatches thereby initiating DNA repair. MSH2 seems to act as a scaffold for the other MutS homologs that provide substrate-binding and substrate specificity. When bound, heterodimers bend the DNA helix and shield approximately 20 base pairs. MutS alpha acts mainly to repair base-base and single insertion-deletion mismatches that occur during replication, but can also repair longer insertion-deletion loops (IDLs), although with decreasing efficiency as the size of the extrahelical loop increases. MutS beta acts mainly to repair IDLs from 2 to 13 nucleotides in size, but can also repair base-base and single insertion-deletion mismatches. After mismatch binding, MutS alpha or beta form a ternary complex with a MutL heterodimer, which is thought to be responsible for directing the downstream MMR events, including strand discrimination, excision, and resynthesis. ATP binding and hydrolysis play a pivotal role in mismatch repair functions. Both subunits bind ATP, but with differing affinities, and their ATPase kinetics are also very different. MSH6 binds and hydrolyzes ATP rapidly, whereas MSH2 catalyzes ATP at a substantially slower rate. Binding to a mismatched base pair suppresses MSH6-catalyzed ATP hydrolysis, but not the activity of MSH2. ATP binding to both subunits is necessary to trigger a change in MutS alpha interaction with mismatched DNA, converting MutS alpha into a sliding clamp capable of hydrolysis-independent movement along DNA, and also facilitates formation of ternary complexes containing MutS and MutL proteins and the mismatch. MutS beta also has a role in regulation of heteroduplex formation during mitotic and meiotic recombination. MutS beta binds to DNA flap structures predicted to form during recombination, and is required for 3' non-homologous tail removal (NHTR). MutS beta-binding alters the DNA conformation of its substrate at the ds/ssDNA junction and may facilitate its recognition and/or cleavage by the downstream nucleotide excision repair (NER) RAD1-RAD10 endonuclease. The polypeptide is DNA mismatch repair protein MSH2 (MSH2) (Saccharomyces cerevisiae (strain ATCC 204508 / S288c) (Baker's yeast)).